A 127-amino-acid chain; its full sequence is Fluoride-specific ion channel FluC (127 aa).

4 consecutive transmembrane segments (helical) span residues 6–26, 37–57, 67–87, and 96–116; these read LAIS…GLGF, TLLA…FFAA, LLVI…SAEV, and LLWA…MTLL. Positions 75 and 78 each coordinate Na(+).

Belongs to the fluoride channel Fluc/FEX (TC 1.A.43) family.

It is found in the cell inner membrane. It catalyses the reaction fluoride(in) = fluoride(out). Na(+) is not transported, but it plays an essential structural role and its presence is essential for fluoride channel function. Functionally, fluoride-specific ion channel. Important for reducing fluoride concentration in the cell, thus reducing its toxicity. The protein is Fluoride-specific ion channel FluC of Tolumonas auensis (strain DSM 9187 / NBRC 110442 / TA 4).